We begin with the raw amino-acid sequence, 870 residues long: Serine protease DegP homolog (870 aa).

Residues 1-29 form the signal peptide; sequence MDIIFCTPTYCKIMLMIIMLISLRTRCDT. The segment at 128 to 151 is disordered; it reads KNPLNDNFKNPKLRKHSPNNKKNK. The span at 138–151 shows a compositional bias: basic residues; it reads PKLRKHSPNNKKNK. Active-site charge relay system residues include histidine 328, aspartate 359, and serine 437.

Belongs to the peptidase S1C family. As to quaternary structure, oligomer; may form trimers or hexamers. Forms a complex at least composed of DegP, ENO and HSP70.

Its subcellular location is the cytoplasm. It localises to the parasitophorous vacuole. The protein resides in the host cell membrane. It is found in the host cytoplasm. Serine protease which also acts as a protein chaperone. Plays a role in the parasite development in host erythrocytes possibly by protecting it against thermal and oxidative stresses. This Plasmodium falciparum (isolate 3D7) protein is Serine protease DegP homolog.